Here is a 55-residue protein sequence, read N- to C-terminus: Large ribosomal subunit protein bL32c (55 aa).

Residues 1 to 24 (MAVPKKRTSKSKKNARKANWKRKG) form a disordered region.

Belongs to the bacterial ribosomal protein bL32 family.

The protein localises to the plastid. The protein resides in the chloroplast. The chain is Large ribosomal subunit protein bL32c from Phaeodactylum tricornutum (strain CCAP 1055/1).